A 396-amino-acid polypeptide reads, in one-letter code: Probable mannan endo-1,4-beta-mannosidase A-2 (396 aa).

Residues 1–21 (MKVPRLLLALGGLASIHIASA) form the signal peptide. W99 lines the substrate pocket. The N-linked (GlcNAc...) asparagine glycan is linked to N120. Residue N212 participates in substrate binding. E213 (proton donor) is an active-site residue. N-linked (GlcNAc...) asparagine glycosylation occurs at N270. Residue Y288 participates in substrate binding. The active-site Nucleophile is the E321. A substrate-binding site is contributed by W351.

This sequence belongs to the glycosyl hydrolase 5 (cellulase A) family.

The protein localises to the secreted. The enzyme catalyses Random hydrolysis of (1-&gt;4)-beta-D-mannosidic linkages in mannans, galactomannans and glucomannans.. Its function is as follows. Endo-1,4-mannanase, a crucial enzyme for depolymerization of seed galactomannans and wood galactoglucomannans. The sequence is that of Probable mannan endo-1,4-beta-mannosidase A-2 (manA-2) from Aspergillus terreus (strain NIH 2624 / FGSC A1156).